Consider the following 233-residue polypeptide: Adenosine 5'-phosphosulfate reductase (233 aa).

[4Fe-4S] cluster contacts are provided by Cys-120, Cys-121, Cys-203, and Cys-206. Cys-229 functions as the Nucleophile; cysteine thiosulfonate intermediate in the catalytic mechanism.

This sequence belongs to the PAPS reductase family. CysH subfamily. [4Fe-4S] cluster is required as a cofactor.

It localises to the cytoplasm. It carries out the reaction [thioredoxin]-disulfide + sulfite + AMP + 2 H(+) = adenosine 5'-phosphosulfate + [thioredoxin]-dithiol. The protein operates within sulfur metabolism; hydrogen sulfide biosynthesis; sulfite from sulfate. In terms of biological role, catalyzes the formation of sulfite from adenosine 5'-phosphosulfate (APS) using thioredoxin as an electron donor. This chain is Adenosine 5'-phosphosulfate reductase, found in Bacillus velezensis (strain DSM 23117 / BGSC 10A6 / LMG 26770 / FZB42) (Bacillus amyloliquefaciens subsp. plantarum).